The primary structure comprises 491 residues: Aspartyl/glutamyl-tRNA(Asn/Gln) amidotransferase subunit B (491 aa).

This sequence belongs to the GatB/GatE family. GatB subfamily. In terms of assembly, heterotrimer of A, B and C subunits.

It carries out the reaction L-glutamyl-tRNA(Gln) + L-glutamine + ATP + H2O = L-glutaminyl-tRNA(Gln) + L-glutamate + ADP + phosphate + H(+). The catalysed reaction is L-aspartyl-tRNA(Asn) + L-glutamine + ATP + H2O = L-asparaginyl-tRNA(Asn) + L-glutamate + ADP + phosphate + 2 H(+). Functionally, allows the formation of correctly charged Asn-tRNA(Asn) or Gln-tRNA(Gln) through the transamidation of misacylated Asp-tRNA(Asn) or Glu-tRNA(Gln) in organisms which lack either or both of asparaginyl-tRNA or glutaminyl-tRNA synthetases. The reaction takes place in the presence of glutamine and ATP through an activated phospho-Asp-tRNA(Asn) or phospho-Glu-tRNA(Gln). The polypeptide is Aspartyl/glutamyl-tRNA(Asn/Gln) amidotransferase subunit B (Burkholderia cenocepacia (strain HI2424)).